The primary structure comprises 478 residues: Septin-4 (478 aa).

The tract at residues 1-115 is disordered; the sequence is MDHSLGWQGN…RSPWGKLDPY (115 aa). Serine 28, serine 29, and serine 68 each carry phosphoserine. A compositionally biased stretch (polar residues) spans 84-93; sequence PQPSDSQQYF. Low complexity predominate over residues 94-108; it reads SAPAPLSPSSRPRSP. Serine 117 and serine 118 each carry phosphoserine. The Septin-type G domain maps to 141 to 414; that stretch reads KGFDFTLMVA…ENYRAQCIQS (274 aa). Positions 151 to 158 are G1 motif; it reads GESGLGKS. Residues 151-158 and threonine 185 each bind GTP; that span reads GESGLGKS. Residues 208–211 form a G3 motif region; it reads DTPG. A G4 motif region spans residues 289 to 292; sequence AKAD. Position 290–298 (290–298) interacts with GTP; it reads KADTLTPPE. Serine 325 is modified (phosphoserine). GTP contacts are provided by glycine 348 and arginine 363. A disordered region spans residues 428–449; that stretch reads LTRESGTDFPIPAVPPGTDPET. Phosphoserine is present on serine 432. Threonine 434 is subject to Phosphothreonine. Residues 447 to 478 are a coiled coil; that stretch reads PETEKLIREKDEELRRMQEMLHKIQRQMKETH.

This sequence belongs to the TRAFAC class TrmE-Era-EngA-EngB-Septin-like GTPase superfamily. Septin GTPase family. As to quaternary structure, septins polymerize into heterooligomeric protein complexes that form filaments, and can associate with cellular membranes, actin filaments and microtubules. GTPase activity is required for filament formation. Interacts with SEPTIN8. Component of a septin core octameric complex consisting of SEPTIN12, SEPTIN7, SEPTIN6 and SEPTIN2 or SEPTIN4 in the order 12-7-6-2-2-6-7-12 or 12-7-6-4-4-6-7-12. Interacts with SEPTIN14 (via C-terminus). Interacts with DYRK1A. Interacts with SLC6A3/DAT and SNCA/alpha-synuclein. Interacts with STX1A; in the striatum. Interacts with XIAP (via BIR3 domain) following the induction of apoptosis. Interacts with AREL1 (via HECT domain); in the cytoplasm following induction of apoptosis. Interacts with DPYSL5. In terms of processing, phosphorylated by DYRK1A. Post-translationally, ubiquitinated by AREL1. May be phosphorylated. Expressed in the cerebral cortex, striatum, midbrain, cerebellum and spinal cord (at protein level). Expressed in the substantia nigra pars compacta, ventral tegmental area, projection fiber bundles and in axon terminals surrounding striatal neurons (at protein level). Expressed in hair follicle stem cells (at protein level). Expressed in small intestinal crypts; abundantly expressed at the crypt base (at protein level). Widely expressed in the brain and to a lesser extent in the testis, lung and liver. As to expression, highly expressed in the brain and testis and, to a lesser extent in the heart, lung and kidney. In the brain, abundant in areas of high cell density, particularly in the stria terminalis. Expressed in the entorhinal, temporal and visual cortices and the hippocampus of the brain where is colocalizes with DYRK1A in postnatal day 1 and adult mice. Expressed and extensively colocalizes with DYRK1A in apical dendrites of pyramidal cells. In terms of tissue distribution, predominantly expressed in embryonic brain and dorsal root ganglion neurons. Expressed in LGR5-positive intestinal stem cells and lysozyme-positive Paneth cells (at protein level). Expressed in the brain and testis.

It is found in the cytoplasm. Its subcellular location is the cell projection. It localises to the cilium. The protein localises to the flagellum. The protein resides in the cytoplasmic vesicle. It is found in the secretory vesicle. Its subcellular location is the axon. It localises to the dendrite. The protein localises to the perikaryon. The protein resides in the synapse. It is found in the mitochondrion. Its subcellular location is the cytosol. In terms of biological role, filament-forming cytoskeletal GTPase. Pro-apoptotic protein involved in LGR5-positive intestinal stem cell and Paneth cell expansion in the intestines, via its interaction with XIAP. May also play a role in the regulation of cell fate in the intestine. Positive regulator of apoptosis involved in hematopoietic stem cell homeostasis; via its interaction with XIAP. Negative regulator of repair and hair follicle regeneration in response to injury, due to inhibition of hair follicle stem cell proliferation, potentially via its interaction with XIAP. Plays an important role in male fertility and sperm motility. During spermiogenesis, essential for the establishment of the annulus (a fibrous ring structure connecting the midpiece and the principal piece of the sperm flagellum) which is a requisite for the structural and mechanical integrity of the sperm. Involved in the migration of cortical neurons and the formation of neuron leading processes during embryonic development. Required for dopaminergic metabolism in presynaptic autoreceptors; potentially via activity as a presynaptic scaffold protein. This Mus musculus (Mouse) protein is Septin-4.